A 511-amino-acid polypeptide reads, in one-letter code: MTSSTESKHSNDESTDLEKQDAEESHGLPEERKQDIAAQLSSSDVQDPNLVDWDGPDDPANPMNWPKSKRLGHVVMASLTTLFANITSTAFAPAASSLEAEFGITSSITAALTVSIYLLGFAFGPLVIAPLSEHFGRLPVYRVCTVITVAFLIGCAQAKNLGMFLVFRLITGIAGSGPGTIGGGTIADVMAPENRGKAMGAFAMGPLMGPVLGPLMSGFIAQYLDWRWVFRVLCIATGVMTIVLYFVMTETYGPVLLKRKAARLRKETGNPDLHTKLEASGVSPLASLWMALQRPTKMLIFSPITLLLSLYCAFVFGLLILLFTTFSAVYRQQYGFNVSMGGLSYLGLGFGLAIGLVLFGMLSDKVAKKDSARSSEWKPEARLLLMVWFAPVIPGGFFWYGWTAYYKVHWILPMMGTSLIGMGALMVMMPIQVYLVDAFGPRVAASALAANTLLRSLAGCFLPLAGPSLYEALGLGWGNTLLGFIAIGFTCLPILFYRFGGKLRLRFPVTF.

The segment covering 1–35 has biased composition (basic and acidic residues); the sequence is MTSSTESKHSNDESTDLEKQDAEESHGLPEERKQD. The disordered stretch occupies residues 1–65; it reads MTSSTESKHS…PDDPANPMNW (65 aa). The next 7 helical transmembrane spans lie at 74–94, 108–128, 147–167, 169–189, 201–221, 228–248, and 303–323; these read VVMASLTTLFANITSTAFAPA, ITAALTVSIYLLGFAFGPLVI, ITVAFLIGCAQAKNLGMFLVF, LITGIAGSGPGTIGGGTIADV, AFAMGPLMGPVLGPLMSGFIA, WVFRVLCIATGVMTIVLYFVM, and PITLLLSLYCAFVFGLLILLF. An N-linked (GlcNAc...) asparagine glycan is attached at Asn-337. 5 helical membrane passes run 342–362, 383–403, 411–431, 443–465, and 476–496; these read GLSYLGLGFGLAIGLVLFGML, LLLMVWFAPVIPGGFFWYGWT, ILPMMGTSLIGMGALMVMMPI, VAASALAANTLLRSLAGCFLPLA, and GWGNTLLGFIAIGFTCLPILF.

Belongs to the major facilitator superfamily.

It localises to the membrane. MFS-type transporper; part of the gene cluster that mediates the biosynthesis of macrophasetins, 3-decalinoyltetramic acids (DTAs) which feature a tetramate (pyrrolidine-2,4-dione) unit connected to a decalin fragment and that have potent bioactivities. Efflux pump that might be required for efficient secretion of macrophasetins. The chain is MFS-type transporper mpsC from Macrophomina phaseolina (strain MS6) (Charcoal rot fungus).